The following is a 138-amino-acid chain: Small ribosomal subunit protein bS6 (138 aa).

A compositionally biased stretch (basic and acidic residues) spans 97–121; sequence TEQSEMLKAEENRSERRERRDRPDN. Residues 97-138 are disordered; that stretch reads TEQSEMLKAEENRSERRERRDRPDNTDGSNENDSDSDNNADE. A compositionally biased stretch (acidic residues) spans 126–138; that stretch reads NENDSDSDNNADE.

This sequence belongs to the bacterial ribosomal protein bS6 family.

In terms of biological role, binds together with bS18 to 16S ribosomal RNA. This is Small ribosomal subunit protein bS6 from Stutzerimonas stutzeri (strain A1501) (Pseudomonas stutzeri).